The following is a 315-amino-acid chain: Glutaminase (315 aa).

7 residues coordinate substrate: serine 70, asparagine 120, glutamate 166, asparagine 173, tyrosine 197, tyrosine 249, and valine 267.

It belongs to the glutaminase family. Homotetramer.

It catalyses the reaction L-glutamine + H2O = L-glutamate + NH4(+). This Sinorhizobium fredii (strain NBRC 101917 / NGR234) protein is Glutaminase.